Reading from the N-terminus, the 287-residue chain is Flagellin (287 aa).

The protein belongs to the bacterial flagellin family.

It localises to the secreted. It is found in the bacterial flagellum. Flagellin is the subunit protein which polymerizes to form the filaments of bacterial flagella. The polypeptide is Flagellin (flaA) (Listeria innocua serovar 6a (strain ATCC BAA-680 / CLIP 11262)).